Consider the following 189-residue polypeptide: UPF0301 protein RrIowa_0061 (189 aa).

This sequence belongs to the UPF0301 (AlgH) family.

This chain is UPF0301 protein RrIowa_0061, found in Rickettsia rickettsii (strain Iowa).